We begin with the raw amino-acid sequence, 275 residues long: Large ribosomal subunit protein uL2 (275 aa).

The tract at residues 223–275 (VAMNPVDHPHGGGEGRTSGGRHPVSPWGQPTKGYKTRSNKRTDKYIVRRRNKK) is disordered.

It belongs to the universal ribosomal protein uL2 family. As to quaternary structure, part of the 50S ribosomal subunit. Forms a bridge to the 30S subunit in the 70S ribosome.

Functionally, one of the primary rRNA binding proteins. Required for association of the 30S and 50S subunits to form the 70S ribosome, for tRNA binding and peptide bond formation. It has been suggested to have peptidyltransferase activity; this is somewhat controversial. Makes several contacts with the 16S rRNA in the 70S ribosome. This is Large ribosomal subunit protein uL2 from Shewanella piezotolerans (strain WP3 / JCM 13877).